The following is a 140-amino-acid chain: Large ribosomal subunit protein uL16 (140 aa).

The span at 1–16 shows a compositional bias: basic residues; sequence MLMPKRVKHRKQMKGR. A disordered region spans residues 1-20; it reads MLMPKRVKHRKQMKGRMKGD.

This sequence belongs to the universal ribosomal protein uL16 family. In terms of assembly, part of the 50S ribosomal subunit.

Binds 23S rRNA and is also seen to make contacts with the A and possibly P site tRNAs. The sequence is that of Large ribosomal subunit protein uL16 from Geobacter sulfurreducens (strain ATCC 51573 / DSM 12127 / PCA).